A 603-amino-acid polypeptide reads, in one-letter code: Protein SHORT-ROOT 2 (603 aa).

Disordered stretches follow at residues 11-58 and 106-140; these read HHHH…HSHS and DFSS…SSAG. Low complexity predominate over residues 31–44; it reads SYPSSRGSTSSPSS. Residues 45–58 show a composition bias toward basic residues; sequence HHTHNHTYYHHSHS. The segment covering 108–125 has biased composition (low complexity); it reads SSSSSSRQFHSGTGAPSS. The GRAS domain maps to 179 to 602; it reads AAPSSSGRWA…QPVVWASAWK (424 aa). The leucine repeat I (LRI) stretch occupies residues 186–249; it reads RWAAQLLMEC…LTTSGPRTLR (64 aa). The VHIID stretch occupies residues 268–354; it reads ALKFQELSPW…DTPHLSITTV (87 aa). The short motif at 318 to 322 is the VHIID element; the sequence is LHILD. Positions 370-406 are leucine repeat II (LRII); sequence EIGQRLEKFARLMGVPFSFRAVHHSGDLADLDLAALD. The interval 416–514 is PFYRE; the sequence is LAVNCVNALR…ERAVGRAIVD (99 aa). The interval 517 to 602 is SAW; sequence SCPASQSAER…QPVVWASAWK (86 aa).

The protein belongs to the GRAS family. As to quaternary structure, does not interact with SCR1.

The protein localises to the nucleus. Functionally, putative transcription factor involved in asymmetric cell division. This Oryza sativa subsp. japonica (Rice) protein is Protein SHORT-ROOT 2 (SHR2).